The following is a 276-amino-acid chain: Putative aliphatic sulfonates transport permease protein SsuC (276 aa).

The next 7 helical transmembrane spans lie at 32 to 52, 54 to 74, 87 to 107, 119 to 141, 146 to 168, 199 to 219, and 242 to 262; these read GLLL…LGVV, ATVL…ILSG, AALG…LAGF, LQML…FGFD, ILLI…IRGV, ILLG…VAEL, and VFAG…FVRL. The ABC transmembrane type-1 domain occupies 80 to 260; sequence LQISIYRAAL…VVGKLTDSFV (181 aa).

This sequence belongs to the binding-protein-dependent transport system permease family. CysTW subfamily.

The protein localises to the cell membrane. Functionally, part of a binding-protein-dependent transport system for aliphatic sulfonates. Probably responsible for the translocation of the substrate across the membrane. The protein is Putative aliphatic sulfonates transport permease protein SsuC (ssuC) of Bacillus subtilis (strain 168).